The primary structure comprises 311 residues: Transmembrane protein 177 (311 aa).

Residues 1-17 are Mitochondrial matrix-facing; it reads MAGPLWRTAAFVQRHRT. The helical transmembrane segment at 18 to 38 threads the bilayer; the sequence is GLLVGSCAGLFGVPISYHLFP. Residues 39–166 lie on the Mitochondrial intermembrane side of the membrane; the sequence is DPVVQWLYQY…EVVYLESSTT (128 aa). A helical membrane pass occupies residues 167-187; it reads AVHALLAPACLAGTWALGVGA. Over 188–197 the chain is Mitochondrial matrix; it reads KYTLGLHAGP. The helical transmembrane segment at 198–218 threads the bilayer; it reads MNLRAAFSLVAAVAGFVAYAF. Residues 219 to 311 lie on the Mitochondrial intermembrane side of the membrane; it reads SQDSLTHAVE…WRGMLNPGRS (93 aa).

It belongs to the TMEM177 family. In terms of assembly, found in a complex with COX20, COA6, MT-CO2/COX2, COX18, SCO1 and SCO2. Interacts with COX20. Interacts with COX1, MT-CO2/COX2, SCO1 and SCO2 in a COX20-dependent manner.

It localises to the mitochondrion inner membrane. Functionally, plays a role in the early steps of cytochrome c oxidase subunit II (MT-CO2/COX2) maturation and is required for the stabilization of COX20 and the newly synthesized MT-CO2/COX2 protein. The protein is Transmembrane protein 177 (TMEM177) of Homo sapiens (Human).